The primary structure comprises 417 residues: MKFTELTVKEFENFVQNPSLESHYFQVKENIATRESDGFQVVLLGVKDDDNRVIAASLFSKIPTMGSYVYYSNRGPVMDYSDLGLVDFYLKELDKYLHQHQCLYVKLDPYWLYQVYDKDINPLTEKNDALVNLFKSHGYDHHGFTTQYDSSSQVRWMGVLDLEGKTPASLRKEFDSQRKRNINKAINYGVKVRFLSKDEFGLFLDLYRETEARTGFASKTDDYFYNFIEHYGDKVLVPLAYIDLNEYIQHLQESLNDKENRRDDMMAKENKTDKQLKKIAELDKQIDHDKKELLQASELRQTDGEILNLASGVYFANAYEVNYFSGGSSEKYNQYMGPYAMHWHMINYCFDNGYDRYNFYGLSGDFTENSEDYGVYRFKRGFNVRIEELIGDFYKPINKVKYWLFNTLDRIRNKLKK.

This sequence belongs to the FemABX family.

Its subcellular location is the cytoplasm. The enzyme catalyses MurNAc-L-Ala-D-isoglutaminyl-L-Lys-(N(6)-tri-Gly)-D-Ala-D-Ala-diphospho-di-trans,octa-cis-undecaprenyl-GlcNAc + 2 glycyl-tRNA(Gly) = MurNAc-L-Ala-D-isoglutaminyl-L-Lys-(N(6)-penta-Gly)-D-Ala-D-Ala-diphospho-di-trans,octa-cis-undecaprenyl-GlcNAc + 2 tRNA(Gly) + 2 H(+). Functionally, catalyzes the incorporation of amino acid(s) into the interchain peptide bridge of peptidoglycan, using aminoacyl-tRNA as amino acid donor. The chain is Aminoacyltransferase FemB (femB) from Staphylococcus epidermidis.